A 478-amino-acid chain; its full sequence is Cysteine--tRNA ligase (478 aa).

Zn(2+) is bound at residue Cys29. Residues 31 to 41 carry the 'HIGH' region motif; sequence VTVYDYCHLGH. Zn(2+)-binding residues include Cys213, His238, and Glu242. Residues 270 to 274 carry the 'KMSKS' region motif; it reads KMSKS. Lys273 lines the ATP pocket.

This sequence belongs to the class-I aminoacyl-tRNA synthetase family. In terms of assembly, monomer. Requires Zn(2+) as cofactor.

It localises to the cytoplasm. The catalysed reaction is tRNA(Cys) + L-cysteine + ATP = L-cysteinyl-tRNA(Cys) + AMP + diphosphate. This chain is Cysteine--tRNA ligase, found in Synechococcus sp. (strain ATCC 27144 / PCC 6301 / SAUG 1402/1) (Anacystis nidulans).